The sequence spans 296 residues: HTH-type transcriptional activator AmpR (296 aa).

The 58-residue stretch at 6-63 (LPLNALRAFEASARHLSFTRAAIELCVTQAAVSHQVKSLEERLGVALFKRLPRGLMLT) folds into the HTH lysR-type domain. The H-T-H motif DNA-binding region spans 23 to 42 (FTRAAIELCVTQAAVSHQVK). The tract at residues 83–296 (LLERFEGGHY…EMAAVEARGR (214 aa)) is includes the LysR substrate-binding / effector-binding domain, involved in binding to specific cell-wall-derived muropeptide products, some of which have signaling functions, leading to disparate responses such as antibiotic resistance, virulence, and host cell inflammation. A LysR substrate-binding domain is found at 91–289 (HYRDVLTVGA…AFRGWLLEMA (199 aa)).

It belongs to the LysR transcriptional regulatory family. As to quaternary structure, homodimer.

The protein localises to the cytoplasm. It is found in the membrane. Transcription regulator that plays a critical role in the expression of beta-lactamase AmpC, acting by positive regulation of the ampC gene. Has a wider role in the regulation of expression of genes involved in proteolysis, quorum sensing, and virulence. Acts by binding directly to the promoter region of the ampC gene. Probably does not regulate transcription of its own gene. This Pseudomonas aeruginosa (strain ATCC 15692 / DSM 22644 / CIP 104116 / JCM 14847 / LMG 12228 / 1C / PRS 101 / PAO1) protein is HTH-type transcriptional activator AmpR (ampR).